The following is a 444-amino-acid chain: Exodeoxyribonuclease 7 large subunit (444 aa).

It belongs to the XseA family. As to quaternary structure, heterooligomer composed of large and small subunits.

It is found in the cytoplasm. The catalysed reaction is Exonucleolytic cleavage in either 5'- to 3'- or 3'- to 5'-direction to yield nucleoside 5'-phosphates.. Its function is as follows. Bidirectionally degrades single-stranded DNA into large acid-insoluble oligonucleotides, which are then degraded further into small acid-soluble oligonucleotides. The polypeptide is Exodeoxyribonuclease 7 large subunit (Aliivibrio salmonicida (strain LFI1238) (Vibrio salmonicida (strain LFI1238))).